We begin with the raw amino-acid sequence, 347 residues long: Melatonin receptor type 1B-B (347 aa).

Residues 1–36 (MPENIAFLTNSTDLGHVGRALGSSARPAWAIAVLAS) lie on the Extracellular side of the membrane. Residue N10 is glycosylated (N-linked (GlcNAc...) asparagine). The helical transmembrane segment at 37–57 (VLIFTTVVDVLGNLLVIISVF) threads the bilayer. Over 58–72 (RNRKLRNAGNVFVVS) the chain is Cytoplasmic. The helical transmembrane segment at 73–93 (LAFADLVVAFYPYPLVLYAIF) threads the bilayer. The Extracellular segment spans residues 94–105 (HDGWSLGETQCK). C104 and C181 are oxidised to a cystine. The helical transmembrane segment at 106–126 (ISGFLMGLSVIGSVFNITGIA) threads the bilayer. At 127–148 (INRYCYICHSFAYGRLYSFRNT) the chain is on the cytoplasmic side. A helical membrane pass occupies residues 149-169 (LLLVALIWALTVLAILPNFFV). Residues 170-191 (GSLSYDPRVYSCTFTQTASSSY) are Extracellular-facing. The helical transmembrane segment at 192-212 (TVVVVVVHFLVPIAVVTFCYL) threads the bilayer. The Cytoplasmic portion of the chain corresponds to 213–244 (RIWVLVIQVRRKVKSEERSRVRPSDLRNFVTM). The helical transmembrane segment at 245 to 265 (FVVFVLFAICWAPLNLIGLVV) threads the bilayer. At 266–278 (AINPEVMAPRVPE) the chain is on the extracellular side. The helical transmembrane segment at 279–299 (WLFVVSYFMAYFNSCLNAIIY) threads the bilayer. Residues 300 to 347 (GLLNRNFRKEYVRIMTAVWIPRRFVTETSRAATDGMRSKPSPAINNNE) lie on the Cytoplasmic side of the membrane.

Belongs to the G-protein coupled receptor 1 family.

It localises to the cell membrane. Functionally, high affinity receptor for melatonin. The activity of this receptor is mediated by pertussis toxin sensitive G proteins that inhibits adenylate cyclase activity. In Danio rerio (Zebrafish), this protein is Melatonin receptor type 1B-B (mtnr1bb).